The chain runs to 470 residues: Cytochrome P450 monooxygenase FUM2 (470 aa).

Cysteine 414 contributes to the heme binding site.

It belongs to the cytochrome P450 family. It depends on heme as a cofactor.

It participates in mycotoxin biosynthesis. In terms of biological role, cytochrome P450 monooxygenase; part of the gene cluster that mediates the biosynthesis of fumonisins B1 (FB1), B2 (FB2), B3 (FB3), and B4 (FB4), which are carcinogenic mycotoxins. Within the pathway, FUM2 performs the C-10 hydroxylation present in FB2 and FB4 and which occurs early in the biosynthesis. The biosynthesis starts with the FUM1-catalyzed carbon chain assembly from one molecule of acetyl-CoA, eight molecules of malonyl-CoA, and two molecules of methionine (in S-adenosyl form). The C18 polyketide chain is released from the enzyme by a nucleophilic attack of a carbanion, which is derived from R-carbon of alanine by decarboxylation, on the carbonyl carbon of polyketide acyl chain. This step is catalyzed by the pyridoxal 5'-phosphate-dependent aminoacyl transferase FUM8. The resultant 3-keto intermediate is then stereospecifically reduced to a 3-hydroxyl product by reductase FUM13. Subsequent oxidations at C-10 by the cytochrome P450 monooxygenase FUM2, C-14 and C-15 by FUM6, FUM12 or FUM15, tricarballylic esterification of the hydroxyl groups on C-14 and C-15 by acyltransferase FUM14, and C-5 hydroxylation by 2-keto-glutarate-dependent dioxygenase FUM3 furnish the biosynthesis of fumonisins. The tricarballylic moieties are most likely derived from the citric acid cycle, and their addition to the carbon backbone may involve FUM7, FUM10, FUM11 and FUM14. This Gibberella moniliformis (strain M3125 / FGSC 7600) (Maize ear and stalk rot fungus) protein is Cytochrome P450 monooxygenase FUM2.